Consider the following 259-residue polypeptide: Phosphatidylglycerol--prolipoprotein diacylglyceryl transferase (259 aa).

4 consecutive transmembrane segments (helical) span residues 16-36 (FAIS…WFYA), 55-75 (FITY…VLLY), 92-112 (QGGM…YLFC), and 117-137 (VNFL…LFLG). Arg138 contacts a 1,2-diacyl-sn-glycero-3-phospho-(1'-sn-glycerol). 3 helical membrane-spanning segments follow: residues 172–192 (QLYE…YATF), 201–221 (ALNL…IEIF), and 228–248 (IGFI…MLIL).

The protein belongs to the Lgt family.

It localises to the cell inner membrane. It carries out the reaction L-cysteinyl-[prolipoprotein] + a 1,2-diacyl-sn-glycero-3-phospho-(1'-sn-glycerol) = an S-1,2-diacyl-sn-glyceryl-L-cysteinyl-[prolipoprotein] + sn-glycerol 1-phosphate + H(+). It functions in the pathway protein modification; lipoprotein biosynthesis (diacylglyceryl transfer). Functionally, catalyzes the transfer of the diacylglyceryl group from phosphatidylglycerol to the sulfhydryl group of the N-terminal cysteine of a prolipoprotein, the first step in the formation of mature lipoproteins. This is Phosphatidylglycerol--prolipoprotein diacylglyceryl transferase from Rickettsia canadensis (strain McKiel).